A 103-amino-acid polypeptide reads, in one-letter code: uncharacterized protein (103 aa).

Residues 1-21 form the signal peptide; the sequence is MTGFKVSSFFYILALSRFFNA.

This is an uncharacterized protein from Saccharomyces cerevisiae (strain ATCC 204508 / S288c) (Baker's yeast).